Consider the following 827-residue polypeptide: MTTLTSLQRSEAQRNHIVDLIDKACLRIAPIWPLDSFVAVNPYLGLIDQPFDTVGRYLEQTVGESLFMDHGWFADKIAQGEITDDDLAQAAQQLDPSISLDTIKQQLAVHRQPAPALPLVTNELDRRDAPPVSEFVIEQVSQFMANYYDRGQALWHLPKEASASLFAQWRRYTLINRSASAVGLKQVRQHLLAVPSDAIDALFWALDQINLPESRLPDYLFTLLKTIGGWASWCRYLHFQAGLHGESQHDLRDLLIIRLVWVALVIKETSSAGRQQWRAKLNDWFDPAKLVASPSATATASTKAQSSRIDEILLAAAEQAFRRRINAGLNRQPADAPDQQAERPTVQAAFCIDVRSEVFRRHLEASSPGLETIGFAGFFGLPIDYCRMGESEARLQNPVLINPAYRAQETGDPAIAQHRHARQSRGAIWKQFKLSAASCFTFVESAGLSYVPRLLADSLGWHRSSLPPDAPGLTPEERARLHPQLVKLDGGALSTQEKVDLAEKVLRGLGLTHTFAPIVLLAGHGSSTTNNPHRAGLDCGACAGQAGDVNARVAVQLLNEAAVRLGLIERGIAIPRDTRFVAALHDTTTDHIELLDLDQSGIESDQLSSLTQALKQAGELTRLERLVTLEAQVDTVDAEKQATFRGRDWSQVRPEWGLAGNAAFIAAPRWRTRGLDLGGRAFLHDYDWRHDKEFGVLNVIMTAPLIVANWINLQYYGSTVDNLHQGAGNKVLHNVVGGTVGVIEGNGGDLRVGLAMQSLHDGEQWRHEPLRLSAYIEAPIAEIDKIIAGHDMLNALINNRWMHILHIDDNGIPHRRHAHGDWRPEPI.

4 residues coordinate Zn(2+): cysteine 351, aspartate 353, histidine 524, and cysteine 539.

Belongs to the inorganic carbon transporter (TC 9.A.2) DabA family. Forms a complex with DabB2, possibly a heterodimer. Zn(2+) serves as cofactor.

Its subcellular location is the cell inner membrane. Its activity is regulated as follows. Uptake of inorganic carbon by cells in the presence of thiosulphate is fully inhibited by the uncouplers carbonyl cyanide m-chlorophenyl hydrazone (CCCP), carbonyl cyanide p-trifluoromethoxyphenyl hydrazone (FCCP), S13 or SF6847. Not inhibited by the ATPase inhibitor N,N-dicyclohexylcarbodiimide (DCCD). Inorganic carbon uptake is inhibited by the ionophore CCCP, suggesting uptake is coupled to a cation gradient. Its function is as follows. Part of an energy-coupled inorganic carbon pump; its substrate may be carbon dioxide. Expression of both dabA2 and dabB2 (DAB2) restores growth in ambient air to E.coli deleted of its carbonic anhydrase genes (called CAfree, deletion of 'can' and 'cynT'); neither dabA2 or dabB2 alone is sufficient. Rescue is pH-independent, suggesting it transports CO(2) and not carbonate ions. Together the genes allow greater than normal uptake of inorganic carbon by E.coli. Uptake of carbon dioxide rather than bicarbonate has been suggested based on kinetic calculations. This chain is Probable inorganic carbon transporter subunit DabA2, found in Halothiobacillus neapolitanus (strain ATCC 23641 / c2) (Thiobacillus neapolitanus).